A 419-amino-acid polypeptide reads, in one-letter code: Protein indeterminate-domain 14 (419 aa).

The interval 1–58 (MIDYERSNTTKNINTHHHNPPPSSSSSDLLPDGNGTAVTQKRKRRPAGTPDPEAEVVS) is disordered. 3 consecutive C2H2-type zinc fingers follow at residues 70–92 (YVCE…RRRH), 112–142 (YVCP…RRKH), and 148–175 (WICE…TRGH). Zn(2+) is bound by residues Cys-150, Cys-153, His-166, Cys-170, Cys-177, Cys-179, His-192, and Cys-196. The segment at 175 to 198 (HSCDCGRVFSRVESFIEHQDTCTV) adopts a CCHC-type 2; atypical zinc-finger fold. The segment at 185–197 (RVESFIEHQDTCT) is SHR-binding. Disordered stretches follow at residues 200-259 (RSQP…PSTL) and 298-318 (SEVE…EEAR). 2 stretches are compositionally biased toward low complexity: residues 213–230 (QHTT…NNEN) and 246–259 (RRQS…PSTL). The stretch at 313 to 349 (EREEARRETKRQIEIAELEFAEAKRIRQHARAELHKA) forms a coiled coil.

As to quaternary structure, homo- and heterodimer of IDD14alpha and IDD14beta. In terms of tissue distribution, expressed in cotyledons and the vasculature of reosette leaves. Weak expression in hypocotyls and floral organs, but not detected in roots and inflorescence stems.

The protein resides in the nucleus. In terms of biological role, transcription factor regulating starch metabolism by binding directly to the promoter of QQS. The IDD14beta isoform attenuates the transcription factor activity by competitively forming heterodimers with reduced DNA-binding capacity. Regulates lateral organ morphogenesis and gravitropic responses. Has a redundant role with IDD16 in directing leaf and floral organ morphogenesis. Involved in the establishment of auxin gradients through the regulation of auxin biosynthesis and transport. The polypeptide is Protein indeterminate-domain 14 (Arabidopsis thaliana (Mouse-ear cress)).